The sequence spans 278 residues: 4-deoxy-L-threo-5-hexosulose-uronate ketol-isomerase (278 aa).

Residues histidine 196, histidine 198, glutamate 203, and histidine 245 each coordinate Zn(2+).

The protein belongs to the KduI family. As to quaternary structure, homohexamer. The cofactor is Zn(2+).

The enzyme catalyses 5-dehydro-4-deoxy-D-glucuronate = 3-deoxy-D-glycero-2,5-hexodiulosonate. The protein operates within glycan metabolism; pectin degradation; 2-dehydro-3-deoxy-D-gluconate from pectin: step 4/5. Catalyzes the isomerization of 5-dehydro-4-deoxy-D-glucuronate to 3-deoxy-D-glycero-2,5-hexodiulosonate. The sequence is that of 4-deoxy-L-threo-5-hexosulose-uronate ketol-isomerase from Escherichia coli (strain 55989 / EAEC).